A 695-amino-acid polypeptide reads, in one-letter code: Elongation factor G 1 (695 aa).

The 276-residue stretch at 5 to 280 (ARYRNIGIFA…AVVDYLPSPT (276 aa)) folds into the tr-type G domain. GTP-binding positions include 14–21 (AHVDAGKT), 78–82 (DTPGH), and 132–135 (NKLD).

This sequence belongs to the TRAFAC class translation factor GTPase superfamily. Classic translation factor GTPase family. EF-G/EF-2 subfamily.

It is found in the cytoplasm. In terms of biological role, catalyzes the GTP-dependent ribosomal translocation step during translation elongation. During this step, the ribosome changes from the pre-translocational (PRE) to the post-translocational (POST) state as the newly formed A-site-bound peptidyl-tRNA and P-site-bound deacylated tRNA move to the P and E sites, respectively. Catalyzes the coordinated movement of the two tRNA molecules, the mRNA and conformational changes in the ribosome. In Pseudoalteromonas atlantica (strain T6c / ATCC BAA-1087), this protein is Elongation factor G 1.